The chain runs to 253 residues: Neurotrophin-3 (253 aa).

The N-terminal stretch at Met1–Gly18 is a signal peptide. Positions Asn19 to Arg134 are excised as a propeptide. The disordered stretch occupies residues Thr62–Leu89. N-linked (GlcNAc...) asparagine glycosylation is present at Asn127. Disulfide bonds link Cys148/Cys213, Cys191/Cys242, and Cys201/Cys244.

The protein belongs to the NGF-beta family.

The protein resides in the secreted. Seems to promote the survival of visceral and proprioceptive sensory neurons. The polypeptide is Neurotrophin-3 (NTF3) (Bos taurus (Bovine)).